A 338-amino-acid polypeptide reads, in one-letter code: Methionine synthase (338 aa).

Zn(2+) is bound by residues His210, Cys212, Glu234, and Cys294.

It belongs to the archaeal MetE family. Requires Zn(2+) as cofactor.

The protein operates within amino-acid biosynthesis; L-methionine biosynthesis via de novo pathway. Catalyzes the transfer of a methyl group to L-homocysteine resulting in methionine formation. The physiological methyl donor is unknown. This chain is Methionine synthase, found in Pyrococcus abyssi (strain GE5 / Orsay).